We begin with the raw amino-acid sequence, 317 residues long: 1-phosphatidylinositol phosphodiesterase (317 aa).

An N-terminal signal peptide occupies residues 1 to 22 (MYKNYLQRTLVLLLCFILYFFT). The PI-PLC X-box domain occupies 58–196 (LAALSIPGTH…LKDVRGKILL (139 aa)). Histidine 67 (proton acceptor) is an active-site residue. Catalysis depends on histidine 115, which acts as the Proton donor.

As to quaternary structure, monomer.

Its subcellular location is the secreted. The protein localises to the cytoplasm. The enzyme catalyses a 1,2-diacyl-sn-glycero-3-phospho-(1D-myo-inositol) = 1D-myo-inositol 1,2-cyclic phosphate + a 1,2-diacyl-sn-glycerol. Functionally, cleaves glycosylphosphatidylinositol (GPI) and phosphatidylinositol (PI) anchors but not PI phosphates. Important factor in pathogenesis, PI-PLC activity is present only in virulent listeria species. It may participate in the lysis of the phagolysosomal membrane. The protein is 1-phosphatidylinositol phosphodiesterase (plcA) of Listeria monocytogenes serovar 1/2a (strain ATCC BAA-679 / EGD-e).